A 341-amino-acid polypeptide reads, in one-letter code: MSQTTTETIIPLDSSVKDKLDPEYVNFYNKYVCSNLPIVKTHTYPVDFLRNNGNVMPGQSELLPVESTEDITIPRKHTKAPSGVPSRIFRPHGTAPEGGWPCFLWFHGGGWVLGNINTENSFATHMCEQAKCVVVNVDYRLAPEDPFPACIDDGWEALLYCYENADTLGINPNKIAVGGSSAGGNIAAVLSHKVAASPANFPPLVLQLLVVPVCDNTANAKTHKSWELFENTPQLPAAKMMWYRRHYLPNEKDWSNPEASPFFYPDSSFKNVCPALICAAGCDVLSSEAIAYNEKLTKAGVESTIKIYEGCPHPVMAMDAVLEKGRILNKDATNALLAAFA.

Belongs to the AB hydrolase superfamily.

It localises to the cytoplasm. The protein resides in the nucleus. In Schizosaccharomyces pombe (strain 972 / ATCC 24843) (Fission yeast), this protein is AB hydrolase superfamily protein C1039.03.